Consider the following 69-residue polypeptide: Large ribosomal subunit protein uL29 (69 aa).

This sequence belongs to the universal ribosomal protein uL29 family.

This is Large ribosomal subunit protein uL29 from Synechococcus sp. (strain CC9902).